The chain runs to 267 residues: Indole-3-glycerol phosphate synthase (267 aa).

Belongs to the TrpC family.

The catalysed reaction is 1-(2-carboxyphenylamino)-1-deoxy-D-ribulose 5-phosphate + H(+) = (1S,2R)-1-C-(indol-3-yl)glycerol 3-phosphate + CO2 + H2O. Its pathway is amino-acid biosynthesis; L-tryptophan biosynthesis; L-tryptophan from chorismate: step 4/5. In Ralstonia pickettii (strain 12J), this protein is Indole-3-glycerol phosphate synthase.